The primary structure comprises 465 residues: Cerebellar degeneration-related protein 2-like (465 aa).

Coiled coils occupy residues 31–64 (AAEL…HEIE), 91–142 (ARDL…LEQL), and 188–266 (LEQE…YLLA). A disordered region spans residues 282–315 (APEADDPQPGSGDDSNAQDGVSSPAASPSHAVRK). 3 positions are modified to phosphoserine: Ser-308, Ser-318, and Ser-344. The stretch at 350 to 377 (MSILREVDEQYHALLEKYEELLSKCRQH) forms a coiled coil. The segment at 382-421 (RHAGVQTSRPISRDSSWRDLLGGEESPGEGKAGEKSLSQH) is disordered. Ser-407 carries the post-translational modification Phosphoserine.

Belongs to the CDR2 family.

The protein is Cerebellar degeneration-related protein 2-like (Cdr2l) of Mus musculus (Mouse).